A 1128-amino-acid chain; its full sequence is MSSNLSIDERWKVIEAYFKSKGLVRQHLDSYNDFVRNKLQEIIDEQGEIPTEIPGLKVRLGKIRIGKPRVRESDRGEREISPMEARLRNLTYAAPLWLTMIPVENNIEAEPEEVYIGDLPIMLKSAIDPISQYTLDKLIEIGEDPKDPGGYFIVNGSERVIVTQEDLAPNRVLVDTGKTGSNITHTAKIISSTAGYRVPVTIERLKDGTFHVSFPAVPGKIPFVILMRALGILTDRDIVYAVSLDPEIQNELFPSLEQASSIANVDDALDFIGSRVAIGQKRENRIEKAQQIIDKYFLPHLGTSADDRRKKAYYLAYAISKVIELYLGRREPDDKDHYANKRLRLAGDLFASLFRVAFKAFVKDLTYQLEKSKVRGRKLALKALVRPDIVTERIRHALATGNWVGGRTGVSQLLDRTNWLSMLSHLRRVISSLARGQPNFEARDLHGTQWGRMCPFETPEGPNSGLVKNLALMAQIAVGINEKIVEKTLYEMGVVPVEEVIRRVTEGGEDQNEYLKWSKVILNGRLVGYYRDGEELAKKIRERRRKGEISDEVNVGHIVTDFINEVHVNCDSGRVRRPLIIVSNGNPLVTREDIEKLDSGSITFDDLVRQGKIEYLDAEEEENAYVALEPSDLTPEHTHLEIWSPAILGITASIIPYPEHNQSPRNTYQSAMAKQALGLYAANYQLRTDTRAHLLHYPQRPLVQTRALDIIGYTNRPAGNNAILAVISFTGYNMEDSIIMNRSSVERGMYRSTFFRLYSTEEVKYPGGQEDKIVMPEPGVRGYKGKEYYRLLEDNGVVSPEVEVKGGDVLIGKVSPPRFLQEFKELSPEQAKRDTSIVTRHGEMGIVDLVLITETAEGNKLVKVRVRDLRIPSIGDKFASRHGQKGVIGMLIPQVDMPYTVKGVVPDVILNPHALPSRMTLGQIMEGIAGKYAALSGNIVDATPFYKTPIEQLQNEILKYGYLPDATEVTYDGRTGQKIKSRIYFGVVYYQKLHHMVADKIHARARGPVQILTRQPTEGRAREGGLRFGEMERDCLIGFGTAMLLKDRLLDNSDRTTIYVCDQCGYIGWYDKNKNKYVCPIHGDKSNLFPVTVSYAFKLLIQELMSMIISPRLILEDRVGLSGGKGNE.

DsDNA is bound by residues Lys-178, 181 to 182, Lys-206, 435 to 439, and 1027 to 1032; these read SN, RGQPN, and RFGEME. Residues Cys-1061, Cys-1064, Cys-1079, and His-1082 each contribute to the Zn(2+) site.

It belongs to the RNA polymerase beta chain family. In terms of assembly, part of the 13-subunit RNA polymerase complex. It depends on Zn(2+) as a cofactor.

It localises to the cytoplasm. The enzyme catalyses RNA(n) + a ribonucleoside 5'-triphosphate = RNA(n+1) + diphosphate. DNA-dependent RNA polymerase (RNAP) catalyzes the transcription of DNA into RNA using the four ribonucleoside triphosphates as substrates. This subunit is involved in DNA promoter recognition. The protein is DNA-directed RNA polymerase subunit Rpo2 of Saccharolobus shibatae (strain ATCC 51178 / DSM 5389 / JCM 8931 / NBRC 15437 / B12) (Sulfolobus shibatae).